The sequence spans 424 residues: Serine--tRNA ligase (424 aa).

Residue 230–232 participates in L-serine binding; it reads TAE. Residue 261-263 coordinates ATP; sequence RSE. Glu284 is an L-serine binding site. 348–351 is an ATP binding site; it reads EISS. Ser384 contributes to the L-serine binding site.

This sequence belongs to the class-II aminoacyl-tRNA synthetase family. Type-1 seryl-tRNA synthetase subfamily. Homodimer. The tRNA molecule binds across the dimer.

The protein resides in the cytoplasm. The enzyme catalyses tRNA(Ser) + L-serine + ATP = L-seryl-tRNA(Ser) + AMP + diphosphate + H(+). It carries out the reaction tRNA(Sec) + L-serine + ATP = L-seryl-tRNA(Sec) + AMP + diphosphate + H(+). Its pathway is aminoacyl-tRNA biosynthesis; selenocysteinyl-tRNA(Sec) biosynthesis; L-seryl-tRNA(Sec) from L-serine and tRNA(Sec): step 1/1. Catalyzes the attachment of serine to tRNA(Ser). Is also able to aminoacylate tRNA(Sec) with serine, to form the misacylated tRNA L-seryl-tRNA(Sec), which will be further converted into selenocysteinyl-tRNA(Sec). This Streptococcus pneumoniae serotype 19F (strain G54) protein is Serine--tRNA ligase.